The chain runs to 302 residues: Phosphoribosylaminoimidazole-succinocarboxamide synthase (302 aa).

The protein belongs to the SAICAR synthetase family.

It carries out the reaction 5-amino-1-(5-phospho-D-ribosyl)imidazole-4-carboxylate + L-aspartate + ATP = (2S)-2-[5-amino-1-(5-phospho-beta-D-ribosyl)imidazole-4-carboxamido]succinate + ADP + phosphate + 2 H(+). It participates in purine metabolism; IMP biosynthesis via de novo pathway; 5-amino-1-(5-phospho-D-ribosyl)imidazole-4-carboxamide from 5-amino-1-(5-phospho-D-ribosyl)imidazole-4-carboxylate: step 1/2. This Cupriavidus necator (strain ATCC 17699 / DSM 428 / KCTC 22496 / NCIMB 10442 / H16 / Stanier 337) (Ralstonia eutropha) protein is Phosphoribosylaminoimidazole-succinocarboxamide synthase.